The sequence spans 372 residues: Glutamate 5-kinase (372 aa).

ATP is bound at residue Lys-9. Substrate-binding residues include Ser-49, Asp-136, and Asn-148. Residues 168 to 169 (TD) and 210 to 216 (TGGMKSK) each bind ATP. One can recognise a PUA domain in the interval 276 to 360 (EGKVFIDDGA…PAIEVIHRDS (85 aa)).

This sequence belongs to the glutamate 5-kinase family.

The protein localises to the cytoplasm. It catalyses the reaction L-glutamate + ATP = L-glutamyl 5-phosphate + ADP. It participates in amino-acid biosynthesis; L-proline biosynthesis; L-glutamate 5-semialdehyde from L-glutamate: step 1/2. In terms of biological role, catalyzes the transfer of a phosphate group to glutamate to form L-glutamate 5-phosphate. This is Glutamate 5-kinase from Oceanobacillus iheyensis (strain DSM 14371 / CIP 107618 / JCM 11309 / KCTC 3954 / HTE831).